An 869-amino-acid chain; its full sequence is MSSCKTTLSEMVGSVTKDRGTINVKARTRSSNVTFKPPVTHDMVRSLFDPTLKKSLLEKCIALAIISNFFICYWVFQRFGLQFTKYFFLVQYLFWRIAYNLGIGLVLHYQSHYETLTNCAKTHAIFSKIPHNKDANSNFSTNSNSFSEKFWNFIRKFCQYEIRSKMPKEYDLFAYPEEINVWLIFRQFVDLILMQDFVTYIIYVYLSIPYSWVQIFNWRSLLGVILILFNIWVKLDAHRVVKDYAWYWGDFFFLEESELIFDGVFNISPHPMYSIGYLGYYGLSLICNDYKVLLVSVFGHYSQFLFLKYVENPHIERTYGDGTDSDSQMNSRIDDLISKENYDYSRPLINMGLSFNNFNKLRFTDYFTIGTVAALMLGTIMNARFINLNYLFITVFVTKLVSWLFISTILYKQSQSKWFTRLFLENGYTQVYSYEQWQFIYNYYLVLTYTLMIIYTGLQIWSNFSNINNSQLIFGLILVALQTWCDKETRLAISDFGWFYGDFFLSNYISTRKLTSQGIYRYLNHPEAVLGVVGVWGTVLMTNFAVTNIILAVLWTLTNFILVKFIETPHVNKIYGKTKRVSGVGKTLLGLKPLRQVSDIVNRIENIIIKSLVDESKNSNGGAELLPKNYQDNKEWNILIQEAMDSVATRLSPYCELKIENEQIETNFVLPTPVTLNWKMPIELYNGDDWIGLYKVIDTRADREKTRVGSGGHWSATSKDSYMNHGLRHKESVTEIKATEKYVQGKVTFDTSLLYFENGIYEFRYHSGNSHKVLLISTPFEISLPVLNTTTPELFEKDLTEFLTKVNVLKDGKFRPLGNKFFGMDSLKQLIKNSIGVELSSEYMRRVNGDAHVISHRAWDIKQTLDSLA.

At Ser-2 the chain carries N-acetylserine. Over 2-55 (SSCKTTLSEMVGSVTKDRGTINVKARTRSSNVTFKPPVTHDMVRSLFDPTLKKS) the chain is Lumenal. The chain crosses the membrane as a helical span at residues 56-76 (LLEKCIALAIISNFFICYWVF). Topologically, residues 77–86 (QRFGLQFTKY) are cytoplasmic. A helical membrane pass occupies residues 87-107 (FFLVQYLFWRIAYNLGIGLVL). Residues 108 to 187 (HYQSHYETLT…EINVWLIFRQ (80 aa)) lie on the Lumenal side of the membrane. A helical membrane pass occupies residues 188–208 (FVDLILMQDFVTYIIYVYLSI). Topologically, residues 209–212 (PYSW) are cytoplasmic. The chain crosses the membrane as a helical span at residues 213 to 233 (VQIFNWRSLLGVILILFNIWV). Topologically, residues 234–258 (KLDAHRVVKDYAWYWGDFFFLEESE) are lumenal. The helical transmembrane segment at 259–279 (LIFDGVFNISPHPMYSIGYLG) threads the bilayer. Over 280–291 (YYGLSLICNDYK) the chain is Cytoplasmic. Residues 292 to 310 (VLLVSVFGHYSQFLFLKYV) form a helical membrane-spanning segment. At 311–362 (ENPHIERTYGDGTDSDSQMNSRIDDLISKENYDYSRPLINMGLSFNNFNKLR) the chain is on the lumenal side. Residues 363-383 (FTDYFTIGTVAALMLGTIMNA) form a helical membrane-spanning segment. Over 384–389 (RFINLN) the chain is Cytoplasmic. Residues 390-410 (YLFITVFVTKLVSWLFISTIL) traverse the membrane as a helical segment. Residues 411–439 (YKQSQSKWFTRLFLENGYTQVYSYEQWQF) are Lumenal-facing. Residues 440-460 (IYNYYLVLTYTLMIIYTGLQI) form a helical membrane-spanning segment. Residues 461–463 (WSN) lie on the Cytoplasmic side of the membrane. Residues 464–484 (FSNINNSQLIFGLILVALQTW) traverse the membrane as a helical segment. Residues 485-534 (CDKETRLAISDFGWFYGDFFLSNYISTRKLTSQGIYRYLNHPEAVLGVVG) lie on the Lumenal side of the membrane. The helical transmembrane segment at 535-555 (VWGTVLMTNFAVTNIILAVLW) threads the bilayer. The Cytoplasmic portion of the chain corresponds to 556–869 (TLTNFILVKF…DIKQTLDSLA (314 aa)).

It belongs to the class VI-like SAM-binding methyltransferase superfamily. CHO2 family.

It is found in the endoplasmic reticulum membrane. The enzyme catalyses a 1,2-diacyl-sn-glycero-3-phosphoethanolamine + S-adenosyl-L-methionine = a 1,2-diacyl-sn-glycero-3-phospho-N-methylethanolamine + S-adenosyl-L-homocysteine + H(+). Its pathway is phospholipid metabolism; phosphatidylcholine biosynthesis. Its function is as follows. Catalyzes the first step of the methylation pathway of phosphatidylcholine biosynthesis, the SAM-dependent methylation of phosphatidylethanolamine (PE) to phosphatidylmonomethylethanolamine (PMME). This Saccharomyces cerevisiae (strain AWRI1631) (Baker's yeast) protein is Phosphatidylethanolamine N-methyltransferase (CHO2).